The primary structure comprises 387 residues: ATP phosphoribosyltransferase regulatory subunit (387 aa).

This sequence belongs to the class-II aminoacyl-tRNA synthetase family. HisZ subfamily. Heteromultimer composed of HisG and HisZ subunits.

Its subcellular location is the cytoplasm. It participates in amino-acid biosynthesis; L-histidine biosynthesis; L-histidine from 5-phospho-alpha-D-ribose 1-diphosphate: step 1/9. Functionally, required for the first step of histidine biosynthesis. May allow the feedback regulation of ATP phosphoribosyltransferase activity by histidine. This is ATP phosphoribosyltransferase regulatory subunit from Polynucleobacter necessarius subsp. necessarius (strain STIR1).